Consider the following 201-residue polypeptide: Lipoprotein signal peptidase (201 aa).

3 helical membrane passes run 33–53 (LLLS…VLAV), 86–106 (GYTW…FWMG), and 110–130 (VSSW…GNLV). Residues D146 and D160 contribute to the active site. The chain crosses the membrane as a helical span at residues 158–178 (VADPSVVVGAILLVVLSIFGF).

The protein belongs to the peptidase A8 family.

The protein localises to the cell membrane. It catalyses the reaction Release of signal peptides from bacterial membrane prolipoproteins. Hydrolyzes -Xaa-Yaa-Zaa-|-(S,diacylglyceryl)Cys-, in which Xaa is hydrophobic (preferably Leu), and Yaa (Ala or Ser) and Zaa (Gly or Ala) have small, neutral side chains.. The protein operates within protein modification; lipoprotein biosynthesis (signal peptide cleavage). Its function is as follows. This protein specifically catalyzes the removal of signal peptides from prolipoproteins. The polypeptide is Lipoprotein signal peptidase (Mycobacterium leprae (strain Br4923)).